Here is a 231-residue protein sequence, read N- to C-terminus: Caspase-like protein (231 aa).

Belongs to the peptidase C14A family.

This is Caspase-like protein from Trichoplusia ni ascovirus 2c (TnAV-2c).